Consider the following 136-residue polypeptide: Large ribosomal subunit protein uL16 (136 aa).

The protein belongs to the universal ribosomal protein uL16 family. Part of the 50S ribosomal subunit.

Functionally, binds 23S rRNA and is also seen to make contacts with the A and possibly P site tRNAs. The polypeptide is Large ribosomal subunit protein uL16 (Buchnera aphidicola subsp. Cinara cedri (strain Cc)).